Reading from the N-terminus, the 357-residue chain is Histidinol-phosphate aminotransferase (357 aa).

An N6-(pyridoxal phosphate)lysine modification is found at Lys-218.

The protein belongs to the class-II pyridoxal-phosphate-dependent aminotransferase family. Histidinol-phosphate aminotransferase subfamily. As to quaternary structure, homodimer. Requires pyridoxal 5'-phosphate as cofactor.

It carries out the reaction L-histidinol phosphate + 2-oxoglutarate = 3-(imidazol-4-yl)-2-oxopropyl phosphate + L-glutamate. Its pathway is amino-acid biosynthesis; L-histidine biosynthesis; L-histidine from 5-phospho-alpha-D-ribose 1-diphosphate: step 7/9. This is Histidinol-phosphate aminotransferase from Prosthecochloris aestuarii (strain DSM 271 / SK 413).